A 421-amino-acid polypeptide reads, in one-letter code: C2 calcium-dependent domain-containing protein 4C (421 aa).

4 disordered regions span residues 13 to 97 (RGSG…AKLA), 119 to 140 (DWLS…SLPS), 158 to 228 (HTRR…SPFG), and 250 to 303 (VSQL…TVHV). A compositionally biased stretch (polar residues) spans 215–228 (ESDTGSSAESSPFG). Residues serine 262, serine 264, and serine 273 each carry the phosphoserine modification. One can recognise a C2 domain in the interval 305–421 (PRGSVRLLAE…LPLTSLLPFL (117 aa)).

Belongs to the C2CD4 family.

In Homo sapiens (Human), this protein is C2 calcium-dependent domain-containing protein 4C (C2CD4C).